Consider the following 605-residue polypeptide: Phosphoenolpyruvate carboxykinase [GTP] (605 aa).

Substrate is bound by residues R79 and 218–220 (YGG). Positions 227 and 247 each coordinate Mn(2+). A substrate-binding site is contributed by S269. 270–275 (ACGKTN) is a binding site for GTP. C271 is an active-site residue. D294 serves as a coordination point for Mn(2+). Basic and acidic residues predominate over residues 364 to 381 (LTDWKGRDWTPQSDEKAA). Residues 364–385 (LTDWKGRDWTPQSDEKAAHPNS) form a disordered region. 384 to 386 (NSR) contributes to the substrate binding site. Residues R386, R417, and 513-516 (FGEN) contribute to the GTP site.

The protein belongs to the phosphoenolpyruvate carboxykinase [GTP] family. Monomer. The cofactor is Mn(2+).

The protein localises to the cytoplasm. The enzyme catalyses oxaloacetate + GTP = phosphoenolpyruvate + GDP + CO2. Its pathway is carbohydrate biosynthesis; gluconeogenesis. Functionally, catalyzes the conversion of oxaloacetate (OAA) to phosphoenolpyruvate (PEP), the rate-limiting step in the metabolic pathway that produces glucose from lactate and other precursors derived from the citric acid cycle. In Saccharopolyspora erythraea (strain ATCC 11635 / DSM 40517 / JCM 4748 / NBRC 13426 / NCIMB 8594 / NRRL 2338), this protein is Phosphoenolpyruvate carboxykinase [GTP].